We begin with the raw amino-acid sequence, 364 residues long: Protein FAM81A (364 aa).

Coiled coils occupy residues 75 to 107 (FLEE…RDNI), 158 to 189 (NKEQ…VDLS), and 261 to 287 (ANER…QKRN). The interval 281–300 (EESQKRNAEGQRKPDEEKVH) is disordered.

The protein belongs to the FAM81 family. As to quaternary structure, interacts with DLG4/PSD-95, GRIN2B/GLUN2B and SYNGAP1; the interactions facilitate condensate formation. Expressed in most regions of the brain (at protein level).

The protein localises to the postsynaptic density. It is found in the cytoplasm. Facilitates the interaction and assembly of proteins within the postsynaptic density by promoting the condensation of postsynaptic proteins via liquid-liquid phase separation. Required for neuronal activity. Accumulation at the postsynaptic density results in enlargement of dendritic spines. This chain is Protein FAM81A (Fam81a), found in Mus musculus (Mouse).